We begin with the raw amino-acid sequence, 349 residues long: Ribosomal RNA small subunit methyltransferase H 2 (349 aa).

S-adenosyl-L-methionine is bound by residues 80–82, Asp-100, Phe-130, Asp-149, and Gln-156; that span reads GGH.

It belongs to the methyltransferase superfamily. RsmH family.

It localises to the cytoplasm. It catalyses the reaction cytidine(1402) in 16S rRNA + S-adenosyl-L-methionine = N(4)-methylcytidine(1402) in 16S rRNA + S-adenosyl-L-homocysteine + H(+). In terms of biological role, specifically methylates the N4 position of cytidine in position 1402 (C1402) of 16S rRNA. The protein is Ribosomal RNA small subunit methyltransferase H 2 of Alkaliphilus metalliredigens (strain QYMF).